Consider the following 107-residue polypeptide: Large ribosomal subunit protein uL18c (107 aa).

This sequence belongs to the universal ribosomal protein uL18 family. Part of the 50S ribosomal subunit; contacts the 5S rRNA.

The protein localises to the plastid. The protein resides in the chloroplast. Functionally, binds 5S rRNA, forms part of the central protuberance of the 50S subunit. The protein is Large ribosomal subunit protein uL18c (rpl18) of Guillardia theta (Cryptophyte).